Reading from the N-terminus, the 20-residue chain is Short cationic peptide-4d (20 aa).

Position 20 is a glutamic acid 1-amide (Glu20).

As to expression, expressed by the venom gland.

The protein localises to the secreted. This is Short cationic peptide-4d from Cupiennius salei (American wandering spider).